The primary structure comprises 45 residues: Large ribosomal subunit protein bL34 (45 aa).

It belongs to the bacterial ribosomal protein bL34 family.

This is Large ribosomal subunit protein bL34 from Streptomyces avermitilis (strain ATCC 31267 / DSM 46492 / JCM 5070 / NBRC 14893 / NCIMB 12804 / NRRL 8165 / MA-4680).